The sequence spans 464 residues: Asparagine--tRNA ligase (464 aa).

It belongs to the class-II aminoacyl-tRNA synthetase family. Homodimer.

It is found in the cytoplasm. It carries out the reaction tRNA(Asn) + L-asparagine + ATP = L-asparaginyl-tRNA(Asn) + AMP + diphosphate + H(+). This Acetivibrio thermocellus (strain ATCC 27405 / DSM 1237 / JCM 9322 / NBRC 103400 / NCIMB 10682 / NRRL B-4536 / VPI 7372) (Clostridium thermocellum) protein is Asparagine--tRNA ligase.